We begin with the raw amino-acid sequence, 223 residues long: UPF0441 protein YgiB (223 aa).

The segment covering threonine 178–threonine 195 has biased composition (low complexity). The interval threonine 178–glycine 223 is disordered. The span at alanine 204–glycine 223 shows a compositional bias: polar residues.

Belongs to the UPF0441 family.

This is UPF0441 protein YgiB from Escherichia coli O6:K15:H31 (strain 536 / UPEC).